Reading from the N-terminus, the 1766-residue chain is DNA-directed RNA polymerase II subunit RPB1-A (1766 aa).

Residues Cys69, Cys72, Cys79, and His82 each coordinate Zn(2+). Mg(2+)-binding residues include Asp487, Asp489, and Asp491. The bridging helix stretch occupies residues 813-825 (PHEFFFHTMAGRE). The disordered stretch occupies residues 1660-1766 (HAMSSAAPPS…EFGDEEEEEQ (107 aa)). The segment covering 1706 to 1716 (RGDEPSTHRSD) has biased composition (basic and acidic residues). Over residues 1742-1756 (PTAKTPQQAAPPTAA) the composition is skewed to low complexity.

It belongs to the RNA polymerase beta' chain family. As to quaternary structure, component of the RNA polymerase II (Pol II) complex consisting of 12 subunits.

Its subcellular location is the nucleus. The catalysed reaction is RNA(n) + a ribonucleoside 5'-triphosphate = RNA(n+1) + diphosphate. DNA-dependent RNA polymerase catalyzes the transcription of DNA into RNA using the four ribonucleoside triphosphates as substrates. Largest and catalytic component of RNA polymerase II which synthesizes mRNA precursors and many functional non-coding RNAs. Forms the polymerase active center together with the second largest subunit. Pol II is the central component of the basal RNA polymerase II transcription machinery. It is composed of mobile elements that move relative to each other. RPB1 is part of the core element with the central large cleft, the clamp element that moves to open and close the cleft and the jaws that are thought to grab the incoming DNA template. At the start of transcription, a single-stranded DNA template strand of the promoter is positioned within the central active site cleft of Pol II. A bridging helix emanates from RPB1 and crosses the cleft near the catalytic site and is thought to promote translocation of Pol II by acting as a ratchet that moves the RNA-DNA hybrid through the active site by switching from straight to bent conformations at each step of nucleotide addition. During transcription elongation, Pol II moves on the template as the transcript elongates. This is DNA-directed RNA polymerase II subunit RPB1-A (TRP4.8) from Trypanosoma brucei brucei.